Reading from the N-terminus, the 422-residue chain is Serine hydroxymethyltransferase (422 aa).

Residues L118 and G122–L124 contribute to the (6S)-5,6,7,8-tetrahydrofolate site. Position 227 is an N6-(pyridoxal phosphate)lysine (K227). E242 lines the (6S)-5,6,7,8-tetrahydrofolate pocket.

The protein belongs to the SHMT family. As to quaternary structure, homodimer. Pyridoxal 5'-phosphate is required as a cofactor.

It localises to the cytoplasm. It catalyses the reaction (6R)-5,10-methylene-5,6,7,8-tetrahydrofolate + glycine + H2O = (6S)-5,6,7,8-tetrahydrofolate + L-serine. The protein operates within one-carbon metabolism; tetrahydrofolate interconversion. It functions in the pathway amino-acid biosynthesis; glycine biosynthesis; glycine from L-serine: step 1/1. Functionally, catalyzes the reversible interconversion of serine and glycine with tetrahydrofolate (THF) serving as the one-carbon carrier. This reaction serves as the major source of one-carbon groups required for the biosynthesis of purines, thymidylate, methionine, and other important biomolecules. Also exhibits THF-independent aldolase activity toward beta-hydroxyamino acids, producing glycine and aldehydes, via a retro-aldol mechanism. The polypeptide is Serine hydroxymethyltransferase (Sulfurihydrogenibium sp. (strain YO3AOP1)).